Here is a 929-residue protein sequence, read N- to C-terminus: Ras guanine nucleotide exchange factor M (929 aa).

Polar residues predominate over residues 1–15 (MWQKPSLTKSMMNEV). 2 disordered regions span residues 1-102 (MWQK…AAGS) and 169-316 (TNNN…SKSL). Over residues 16 to 33 (SSNSPKSPTLTSSPSTQS) the composition is skewed to low complexity. Over residues 44 to 67 (LDGGGGGSNRLIFGGSGGGSGGGS) the composition is skewed to gly residues. 2 stretches are compositionally biased toward low complexity: residues 68 to 80 (LPSS…VNPF) and 169 to 191 (TNNN…NNDG). Gly residues predominate over residues 192 to 202 (SGSGSGAGGSF). The span at 203–246 (IGTTTSAKTTSTTSTSAATTTTTTTTSSSSSSPSSSSPSSTSPT) shows a compositional bias: low complexity. A compositionally biased stretch (polar residues) spans 247 to 256 (IASNNDNNNK). Low complexity predominate over residues 270 to 287 (PPLTLSQSQTQQQQQQKV). Over residues 295–305 (RFSTNSSGSQS) the composition is skewed to polar residues. One can recognise an N-terminal Ras-GEF domain in the interval 390–528 (NKFVVVSGPK…PILDLYEKLK (139 aa)). The interval 540 to 583 (SLSGSGGISNNNNGSDLKNSNNGNNSSNNNNSSSNSSSSSSSSD) is disordered. Residues 676–911 (SPQDIAKQLT…YAFSKFIESP (236 aa)) form the Ras-GEF domain.

Its function is as follows. Promotes the exchange of Ras-bound GDP by GTP. This Dictyostelium discoideum (Social amoeba) protein is Ras guanine nucleotide exchange factor M (gefM).